We begin with the raw amino-acid sequence, 55 residues long: Large ribosomal subunit protein bL33 (55 aa).

Belongs to the bacterial ribosomal protein bL33 family.

This Rhizobium meliloti (strain 1021) (Ensifer meliloti) protein is Large ribosomal subunit protein bL33.